Reading from the N-terminus, the 105-residue chain is Large ribosomal subunit protein uL24 (105 aa).

Belongs to the universal ribosomal protein uL24 family. As to quaternary structure, part of the 50S ribosomal subunit.

One of two assembly initiator proteins, it binds directly to the 5'-end of the 23S rRNA, where it nucleates assembly of the 50S subunit. Functionally, one of the proteins that surrounds the polypeptide exit tunnel on the outside of the subunit. This chain is Large ribosomal subunit protein uL24, found in Hahella chejuensis (strain KCTC 2396).